The chain runs to 166 residues: Short form salivary protein D7R1 (166 aa).

An N-terminal signal peptide occupies residues 1-21 (MFRKVFSVALVTCGLLVIVQA).

Belongs to the PBP/GOBP family. In terms of assembly, interacts with host coagulation factor XII (F12) (inactive and activated) (via amino acids 1-77). Interacts with host high molecular weight kininogen (KNG1) (via amino acids 402-532). In terms of tissue distribution, female salivary gland (at protein level).

The protein localises to the secreted. With respect to regulation, zn(2+) modulates binding to host coagulation factor XII (F12) and high molecular weight kininogen (KNG1). Salivary protein with anticoagulant activity that targets the intrinsic blood coagulation pathway in the host. Inhibits activation of the host plasma contact system by preventing the reciprocal activation of host coagulation factor XII (F12) and prekallikrein (KLKB1). Attenuates generation of bradykinin in host plasma. May bind and sequester different mediators involved in the host response, such as serotonin and histamine. The sequence is that of Short form salivary protein D7R1 from Anopheles stephensi (Indo-Pakistan malaria mosquito).